Consider the following 473-residue polypeptide: Cysteine--tRNA ligase (473 aa).

Zn(2+) is bound at residue cysteine 30. The 'HIGH' region motif lies at 32-42 (MTVYDYCHIGH). Residues cysteine 213, histidine 238, and glutamate 242 each coordinate Zn(2+). A 'KMSKS' region motif is present at residues 270 to 274 (KMSKS). Position 273 (lysine 273) interacts with ATP.

The protein belongs to the class-I aminoacyl-tRNA synthetase family. Monomer. It depends on Zn(2+) as a cofactor.

The protein localises to the cytoplasm. It carries out the reaction tRNA(Cys) + L-cysteine + ATP = L-cysteinyl-tRNA(Cys) + AMP + diphosphate. The protein is Cysteine--tRNA ligase of Acinetobacter baumannii (strain SDF).